We begin with the raw amino-acid sequence, 738 residues long: Eukaryotic translation initiation factor 3 subunit B (738 aa).

Polar residues predominate over residues 1 to 10 (MAPSFENLSE). The interval 1-20 (MAPSFENLSEQDLHEEEEEE) is disordered. The 87-residue stretch at 40–126 (TFVVIDGLPV…HTLLVNKLMD (87 aa)) folds into the RRM domain. WD repeat units follow at residues 193-230 (AHWT…KQKQ), 232-289 (PHPF…RSFV), 301-342 (QPKK…LLGK), 454-494 (SLKD…SFFA), 511-554 (IEKK…EKND), and 569-607 (VDHY…HTFS). The tract at residues 693 to 720 (EAYGLPEEADQPKAAKDAPTNTEDKGET) is disordered. Over residues 702–720 (DQPKAAKDAPTNTEDKGET) the composition is skewed to basic and acidic residues.

This sequence belongs to the eIF-3 subunit B family. As to quaternary structure, component of the eukaryotic translation initiation factor 3 (eIF-3) complex.

The protein resides in the cytoplasm. RNA-binding component of the eukaryotic translation initiation factor 3 (eIF-3) complex, which is involved in protein synthesis of a specialized repertoire of mRNAs and, together with other initiation factors, stimulates binding of mRNA and methionyl-tRNAi to the 40S ribosome. The eIF-3 complex specifically targets and initiates translation of a subset of mRNAs involved in cell proliferation. The sequence is that of Eukaryotic translation initiation factor 3 subunit B (prt1) from Emericella nidulans (strain FGSC A4 / ATCC 38163 / CBS 112.46 / NRRL 194 / M139) (Aspergillus nidulans).